We begin with the raw amino-acid sequence, 227 residues long: Cytochrome c oxidase subunit 2 (227 aa).

The Mitochondrial intermembrane portion of the chain corresponds to 1–14 (MAYPFQLGLQDATS). The chain crosses the membrane as a helical span at residues 15–45 (PIMEELTNFHDHTLMIVFLISSLVLYIISLM). Over 46–59 (LTTKLTHTSTMDAQ) the chain is Mitochondrial matrix. A helical membrane pass occupies residues 60–87 (EVETIWTILPAVILILIALPSLRILYMM). Residues 88-227 (DEINNPVLTV…YFENWSASMI (140 aa)) lie on the Mitochondrial intermembrane side of the membrane. Cu cation-binding residues include His-161, Cys-196, Glu-198, Cys-200, His-204, and Met-207. A Mg(2+)-binding site is contributed by Glu-198. Tyr-218 is subject to Phosphotyrosine.

Belongs to the cytochrome c oxidase subunit 2 family. As to quaternary structure, component of the cytochrome c oxidase (complex IV, CIV), a multisubunit enzyme composed of 14 subunits. The complex is composed of a catalytic core of 3 subunits MT-CO1, MT-CO2 and MT-CO3, encoded in the mitochondrial DNA, and 11 supernumerary subunits COX4I, COX5A, COX5B, COX6A, COX6B, COX6C, COX7A, COX7B, COX7C, COX8 and NDUFA4, which are encoded in the nuclear genome. The complex exists as a monomer or a dimer and forms supercomplexes (SCs) in the inner mitochondrial membrane with NADH-ubiquinone oxidoreductase (complex I, CI) and ubiquinol-cytochrome c oxidoreductase (cytochrome b-c1 complex, complex III, CIII), resulting in different assemblies (supercomplex SCI(1)III(2)IV(1) and megacomplex MCI(2)III(2)IV(2)). Found in a complex with TMEM177, COA6, COX18, COX20, SCO1 and SCO2. Interacts with TMEM177 in a COX20-dependent manner. Interacts with COX20. Interacts with COX16. It depends on Cu cation as a cofactor.

Its subcellular location is the mitochondrion inner membrane. It carries out the reaction 4 Fe(II)-[cytochrome c] + O2 + 8 H(+)(in) = 4 Fe(III)-[cytochrome c] + 2 H2O + 4 H(+)(out). Component of the cytochrome c oxidase, the last enzyme in the mitochondrial electron transport chain which drives oxidative phosphorylation. The respiratory chain contains 3 multisubunit complexes succinate dehydrogenase (complex II, CII), ubiquinol-cytochrome c oxidoreductase (cytochrome b-c1 complex, complex III, CIII) and cytochrome c oxidase (complex IV, CIV), that cooperate to transfer electrons derived from NADH and succinate to molecular oxygen, creating an electrochemical gradient over the inner membrane that drives transmembrane transport and the ATP synthase. Cytochrome c oxidase is the component of the respiratory chain that catalyzes the reduction of oxygen to water. Electrons originating from reduced cytochrome c in the intermembrane space (IMS) are transferred via the dinuclear copper A center (CU(A)) of subunit 2 and heme A of subunit 1 to the active site in subunit 1, a binuclear center (BNC) formed by heme A3 and copper B (CU(B)). The BNC reduces molecular oxygen to 2 water molecules using 4 electrons from cytochrome c in the IMS and 4 protons from the mitochondrial matrix. This Rattus norvegicus (Rat) protein is Cytochrome c oxidase subunit 2.